A 282-amino-acid polypeptide reads, in one-letter code: Pantothenate synthetase (282 aa).

30-37 (MGYLHEGH) lines the ATP pocket. The Proton donor role is filled by His-37. Residue Gln-61 coordinates (R)-pantoate. Gln-61 is a binding site for beta-alanine. Position 147–150 (147–150 (GMKD)) interacts with ATP. Gln-153 contacts (R)-pantoate. ATP-binding positions include Val-176 and 184 to 187 (KSSR).

It belongs to the pantothenate synthetase family. As to quaternary structure, homodimer.

The protein localises to the cytoplasm. It carries out the reaction (R)-pantoate + beta-alanine + ATP = (R)-pantothenate + AMP + diphosphate + H(+). It participates in cofactor biosynthesis; (R)-pantothenate biosynthesis; (R)-pantothenate from (R)-pantoate and beta-alanine: step 1/1. Its function is as follows. Catalyzes the condensation of pantoate with beta-alanine in an ATP-dependent reaction via a pantoyl-adenylate intermediate. This chain is Pantothenate synthetase, found in Geobacillus sp. (strain WCH70).